The primary structure comprises 266 residues: Isopentenyl phosphate kinase (266 aa).

An ATP-binding site is contributed by 5–9; it reads KLGGS. Ala-47 is a substrate binding site. Gly-48 contacts ATP. Residues His-52 and Gly-157 each contribute to the substrate site. ATP contacts are provided by residues Asp-178, 183–188, Gly-219, and Lys-223; that span reads YTRNPK.

This sequence belongs to the isopentenyl phosphate kinase family. Homodimer.

It catalyses the reaction isopentenyl phosphate + ATP = isopentenyl diphosphate + ADP. Catalyzes the formation of isopentenyl diphosphate (IPP), the building block of all isoprenoids. Has lower activity with dimethylallyl phosphate (DMAP) and isopentenyl thiolophosphate (ISP). Has low activity with 1-butyl phosphate (BP) and 3-buten-1-yl phosphate (BEP). Has no significant activity with geranyl phosphate (in vitro). This Methanothermobacter thermautotrophicus (strain ATCC 29096 / DSM 1053 / JCM 10044 / NBRC 100330 / Delta H) (Methanobacterium thermoautotrophicum) protein is Isopentenyl phosphate kinase.